Reading from the N-terminus, the 170-residue chain is Transcription factor E (170 aa).

The HTH TFE/IIEalpha-type domain maps to 1–93 (MKDVYLYIVE…TWYVNDEVIS (93 aa)).

Belongs to the TFE family. As to quaternary structure, monomer. Interaction with RNA polymerase subunits RpoF and RpoE is necessary for Tfe stimulatory transcription activity. Able to interact with Tbp and RNA polymerase in the absence of DNA promoter. Interacts both with the preinitiation and elongation complexes.

Its function is as follows. Transcription factor that plays a role in the activation of archaeal genes transcribed by RNA polymerase. Facilitates transcription initiation by enhancing TATA-box recognition by TATA-box-binding protein (Tbp), and transcription factor B (Tfb) and RNA polymerase recruitment. Not absolutely required for transcription in vitro, but particularly important in cases where Tbp or Tfb function is not optimal. It dynamically alters the nucleic acid-binding properties of RNA polymerases by stabilizing the initiation complex and destabilizing elongation complexes. Seems to translocate with the RNA polymerase following initiation and acts by binding to the non template strand of the transcription bubble in elongation complexes. This chain is Transcription factor E, found in Pyrobaculum calidifontis (strain DSM 21063 / JCM 11548 / VA1).